We begin with the raw amino-acid sequence, 322 residues long: GTP 3',8-cyclase (322 aa).

Residues 5–233 (KYGRVVDYLR…NAPASIYRLD (229 aa)) form the Radical SAM core domain. A GTP-binding site is contributed by arginine 14. The [4Fe-4S] cluster site is built by cysteine 21 and cysteine 25. An S-adenosyl-L-methionine-binding site is contributed by tyrosine 27. A [4Fe-4S] cluster-binding site is contributed by cysteine 28. Position 64 (arginine 64) interacts with GTP. Position 68 (glycine 68) interacts with S-adenosyl-L-methionine. Threonine 95 contributes to the GTP binding site. Position 119 (serine 119) interacts with S-adenosyl-L-methionine. GTP is bound at residue lysine 155. S-adenosyl-L-methionine is bound at residue methionine 189. Residues cysteine 249 and cysteine 252 each contribute to the [4Fe-4S] cluster site. GTP is bound at residue 254-256 (RIR). A [4Fe-4S] cluster-binding site is contributed by cysteine 266.

Belongs to the radical SAM superfamily. MoaA family. In terms of assembly, monomer and homodimer. Requires [4Fe-4S] cluster as cofactor.

The enzyme catalyses GTP + AH2 + S-adenosyl-L-methionine = (8S)-3',8-cyclo-7,8-dihydroguanosine 5'-triphosphate + 5'-deoxyadenosine + L-methionine + A + H(+). It functions in the pathway cofactor biosynthesis; molybdopterin biosynthesis. Functionally, catalyzes the cyclization of GTP to (8S)-3',8-cyclo-7,8-dihydroguanosine 5'-triphosphate. The chain is GTP 3',8-cyclase from Campylobacter curvus (strain 525.92).